Here is a 912-residue protein sequence, read N- to C-terminus: Type II beta methyltransferase M.BslI (912 aa).

Belongs to the N(4)/N(6)-methyltransferase family. N(4) subfamily.

The catalysed reaction is a 2'-deoxycytidine in DNA + S-adenosyl-L-methionine = an N(4)-methyl-2'-deoxycytidine in DNA + S-adenosyl-L-homocysteine + H(+). A beta subtype methylase. Recognizes the double-stranded sequence 5'-CCN(7)GG-3', methylates C-2 on both strands, and protects the DNA from cleavage by the BslI endonuclease. The polypeptide is Type II beta methyltransferase M.BslI (bslIM) (Bacillus sp. (strain NEB-606)).